Reading from the N-terminus, the 845-residue chain is Translation initiation factor IF-2 (845 aa).

2 disordered regions span residues 44-91 (KRRK…NLSS) and 119-256 (ARRA…NQEP). Over residues 119–129 (ARRAKEREESL) the composition is skewed to basic and acidic residues. Residues 139 to 148 (DETPQEEEEP) show a composition bias toward acidic residues. A compositionally biased stretch (polar residues) spans 156-165 (SLSPAQSQIE). Composition is skewed to basic and acidic residues over residues 179-194 (IEKR…DRNS) and 202-217 (SEVR…DEKR). The region spanning 343–510 (LRPPVVTIMG…AILLQAEILD (168 aa)) is the tr-type G domain. The segment at 352 to 359 (GHVDHGKT) is G1. Residue 352-359 (GHVDHGKT) coordinates GTP. A G2 region spans residues 377-381 (GITQH). A G3 region spans residues 398–401 (DTPG). Residues 398 to 402 (DTPGH) and 452 to 455 (NKID) contribute to the GTP site. The tract at residues 452 to 455 (NKID) is G4. The tract at residues 488–490 (SAK) is G5.

The protein belongs to the TRAFAC class translation factor GTPase superfamily. Classic translation factor GTPase family. IF-2 subfamily.

Its subcellular location is the cytoplasm. Functionally, one of the essential components for the initiation of protein synthesis. Protects formylmethionyl-tRNA from spontaneous hydrolysis and promotes its binding to the 30S ribosomal subunits. Also involved in the hydrolysis of GTP during the formation of the 70S ribosomal complex. The sequence is that of Translation initiation factor IF-2 from Bartonella henselae (strain ATCC 49882 / DSM 28221 / CCUG 30454 / Houston 1) (Rochalimaea henselae).